The primary structure comprises 198 residues: Nucleoid occlusion factor SlmA (198 aa).

An HTH tetR-type domain is found at 10-70 (NRREEILQSL…SLIEFIEDSL (61 aa)). The segment at residues 33-52 (TTAKLAASVGVSEAALYRHF) is a DNA-binding region (H-T-H motif). A coiled-coil region spans residues 117 to 144 (EQDRLQGRINQLFERIEAQLRQVLREKR).

This sequence belongs to the nucleoid occlusion factor SlmA family. As to quaternary structure, homodimer. Interacts with FtsZ.

It localises to the cytoplasm. Its subcellular location is the nucleoid. In terms of biological role, required for nucleoid occlusion (NO) phenomenon, which prevents Z-ring formation and cell division over the nucleoid. Acts as a DNA-associated cell division inhibitor that binds simultaneously chromosomal DNA and FtsZ, and disrupts the assembly of FtsZ polymers. SlmA-DNA-binding sequences (SBS) are dispersed on non-Ter regions of the chromosome, preventing FtsZ polymerization at these regions. In Salmonella typhi, this protein is Nucleoid occlusion factor SlmA.